The chain runs to 254 residues: NH(3)-dependent NAD(+) synthetase (254 aa).

Residue 29–36 (GLSGGIDS) coordinates ATP. Mg(2+) is bound at residue aspartate 35. Position 115 (arginine 115) interacts with deamido-NAD(+). Threonine 135 provides a ligand contact to ATP. Residue glutamate 140 participates in Mg(2+) binding. Deamido-NAD(+) is bound by residues lysine 148 and aspartate 155. ATP is bound by residues lysine 164 and serine 186. Deamido-NAD(+) is bound at residue 245–246 (HK).

The protein belongs to the NAD synthetase family. As to quaternary structure, homodimer.

The enzyme catalyses deamido-NAD(+) + NH4(+) + ATP = AMP + diphosphate + NAD(+) + H(+). It functions in the pathway cofactor biosynthesis; NAD(+) biosynthesis; NAD(+) from deamido-NAD(+) (ammonia route): step 1/1. Catalyzes the ATP-dependent amidation of deamido-NAD to form NAD. Uses ammonia as a nitrogen source. This Methanococcus aeolicus (strain ATCC BAA-1280 / DSM 17508 / OCM 812 / Nankai-3) protein is NH(3)-dependent NAD(+) synthetase.